The following is a 281-amino-acid chain: UDP-N-acetylenolpyruvoylglucosamine reductase (281 aa).

Residues 17–180 (VGGKAKKLII…LSATFKFDNG (164 aa)) enclose the FAD-binding PCMH-type domain. Residue arginine 159 is part of the active site. Serine 206 acts as the Proton donor in catalysis. Glutamate 276 is a catalytic residue.

The protein belongs to the MurB family. FAD serves as cofactor.

It localises to the cytoplasm. The enzyme catalyses UDP-N-acetyl-alpha-D-muramate + NADP(+) = UDP-N-acetyl-3-O-(1-carboxyvinyl)-alpha-D-glucosamine + NADPH + H(+). Its pathway is cell wall biogenesis; peptidoglycan biosynthesis. In terms of biological role, cell wall formation. The polypeptide is UDP-N-acetylenolpyruvoylglucosamine reductase (Fusobacterium nucleatum subsp. nucleatum (strain ATCC 25586 / DSM 15643 / BCRC 10681 / CIP 101130 / JCM 8532 / KCTC 2640 / LMG 13131 / VPI 4355)).